Here is a 156-residue protein sequence, read N- to C-terminus: ATP synthase subunit b (156 aa).

Residues 11–31 form a helical membrane-spanning segment; that stretch reads AIAFAIFVMFCMKFVWPPLIG.

This sequence belongs to the ATPase B chain family. F-type ATPases have 2 components, F(1) - the catalytic core - and F(0) - the membrane proton channel. F(1) has five subunits: alpha(3), beta(3), gamma(1), delta(1), epsilon(1). F(0) has three main subunits: a(1), b(2) and c(10-14). The alpha and beta chains form an alternating ring which encloses part of the gamma chain. F(1) is attached to F(0) by a central stalk formed by the gamma and epsilon chains, while a peripheral stalk is formed by the delta and b chains.

It is found in the cell inner membrane. Its function is as follows. F(1)F(0) ATP synthase produces ATP from ADP in the presence of a proton or sodium gradient. F-type ATPases consist of two structural domains, F(1) containing the extramembraneous catalytic core and F(0) containing the membrane proton channel, linked together by a central stalk and a peripheral stalk. During catalysis, ATP synthesis in the catalytic domain of F(1) is coupled via a rotary mechanism of the central stalk subunits to proton translocation. Functionally, component of the F(0) channel, it forms part of the peripheral stalk, linking F(1) to F(0). The sequence is that of ATP synthase subunit b from Psychrobacter cryohalolentis (strain ATCC BAA-1226 / DSM 17306 / VKM B-2378 / K5).